The sequence spans 270 residues: Tryptophan synthase alpha chain (270 aa).

Active-site proton acceptor residues include Glu51 and Asp62.

It belongs to the TrpA family. As to quaternary structure, tetramer of two alpha and two beta chains.

It catalyses the reaction (1S,2R)-1-C-(indol-3-yl)glycerol 3-phosphate + L-serine = D-glyceraldehyde 3-phosphate + L-tryptophan + H2O. Its pathway is amino-acid biosynthesis; L-tryptophan biosynthesis; L-tryptophan from chorismate: step 5/5. The alpha subunit is responsible for the aldol cleavage of indoleglycerol phosphate to indole and glyceraldehyde 3-phosphate. The protein is Tryptophan synthase alpha chain of Methanothermobacter thermautotrophicus (strain ATCC 29096 / DSM 1053 / JCM 10044 / NBRC 100330 / Delta H) (Methanobacterium thermoautotrophicum).